A 372-amino-acid chain; its full sequence is 1,3,6,8-tetrahydroxynaphthalene synthase (372 aa).

Cys138 is an active-site residue.

It belongs to the thiolase-like superfamily. Chalcone/stilbene synthases family. In terms of assembly, homodimer.

It catalyses the reaction 5 malonyl-CoA + 5 H(+) = naphthalene-1,3,6,8-tetrol + 5 CO2 + 5 CoA + H2O. The protein operates within pigment biosynthesis; melanin biosynthesis. Involved in the biosynthesis of melanin but also various secondary metabolites containing a naphthoquinone ring. Catalyzes the iterative condensation of five CoA-linked malonyl units to form a pentaketide intermediate. THNS subsequently catalyzes the dual intramolecular Claisen and aldol condensations of this linear intermediate to produce the fused ring of 1,3,6,8-tetrahydroxynaphthalene (THN). The protein is 1,3,6,8-tetrahydroxynaphthalene synthase of Streptomyces griseus.